A 156-amino-acid chain; its full sequence is Small ribosomal subunit protein uS7 (156 aa).

Belongs to the universal ribosomal protein uS7 family. In terms of assembly, part of the 30S ribosomal subunit. Contacts proteins S9 and S11.

Functionally, one of the primary rRNA binding proteins, it binds directly to 16S rRNA where it nucleates assembly of the head domain of the 30S subunit. Is located at the subunit interface close to the decoding center, probably blocks exit of the E-site tRNA. This chain is Small ribosomal subunit protein uS7, found in Geobacter metallireducens (strain ATCC 53774 / DSM 7210 / GS-15).